A 352-amino-acid chain; its full sequence is C-X-C chemokine receptor type 4 (352 aa).

The segment at 1 to 21 (MEGISIYTSDNYTEEMGSGDY) is important for chemokine binding and signaling. Topologically, residues 1–38 (MEGISIYTSDNYTEEMGSGDYDSIKEPCFREENAHFNR) are extracellular. At Y7 the chain carries Sulfotyrosine. N11 carries an N-linked (GlcNAc...) asparagine glycan. Sulfotyrosine is present on Y12. An O-linked (Xyl...) (chondroitin sulfate) serine glycan is attached at S18. Position 21 is a sulfotyrosine (Y21). Disulfide bonds link C28-C274 and C109-C186. A helical transmembrane segment spans residues 39-63 (IFLPTIYSIIFLTGIVGNGLVILVM). The Cytoplasmic portion of the chain corresponds to 64 to 77 (GYQKKLRSMTDKYR). The chain crosses the membrane as a helical span at residues 78–99 (LHLSVADLLFVITLPFWAVDAV). Positions 94–97 (WAVD) are chemokine binding. At 100 to 110 (ANWYFGNFLCK) the chain is on the extracellular side. Residues 111-130 (AVHVIYTVNLYSSVLILAFI) traverse the membrane as a helical segment. The tract at residues 113–117 (HVIYT) is chemokine binding. Residues 131–154 (SLDRYLAIVHATNSQKPRKLLAEK) lie on the Cytoplasmic side of the membrane. The Important for signaling signature appears at 133-135 (DRY). Positions 135–147 (YLAIVHATNSQKP) are involved in dimerization; when bound to chemokine. Residues 155-174 (VVYVGVWIPALLLTIPDFIF) traverse the membrane as a helical segment. Over 175-195 (ASVSEADDRYICDRFYPNDLW) the chain is Extracellular. The segment at 186 to 190 (CDRFY) is chemokine binding, important for signaling. The involved in dimerization stretch occupies residues 191-210 (PNDLWVVVFQFQHIMVGLIL). A helical membrane pass occupies residues 196–216 (VVVFQFQHIMVGLILPGIDIL). Topologically, residues 217–241 (SCYCIIISKLSHSKGHQKRKALKTT) are cytoplasmic. Residues 242–261 (VILILAFFACWLPYYIGISI) form a helical membrane-spanning segment. Over 262-282 (DSFILLEIIKQGCEFENTVHK) the chain is Extracellular. The involved in dimerization stretch occupies residues 266-268 (LLE). A helical transmembrane segment spans residues 283 to 302 (WISITEALAFFHCCLNPILY). Over 303–352 (AFLGAKFKTSAQHALTSVSRGSSLKILSKGKRGGHSSVSTESESSSFHSS) the chain is Cytoplasmic. A phosphoserine mark is found at S319 and S321. A phosphoserine; by PKC and GRK6 mark is found at S324 and S325. Residues 329–352 (LSKGKRGGHSSVSTESESSSFHSS) form a disordered region. S330 is modified (phosphoserine; by GRK6). A Glycyl lysine isopeptide (Lys-Gly) (interchain with G-Cter in ubiquitin) cross-link involves residue K331. Low complexity predominate over residues 337-352 (HSSVSTESESSSFHSS). S339 bears the Phosphoserine; by GRK6 mark. S348 and S351 each carry phosphoserine.

This sequence belongs to the G-protein coupled receptor 1 family. In terms of assembly, monomer. Can form homodimers. Interacts with CD164. Interacts with ARRB2; the interaction is dependent on the C-terminal phosphorylation of CXCR4 and allows activation of MAPK1 and MAPK3. Interacts with ARR3; the interaction is dependent on the C-terminal phosphorylation of CXCR4 and modulates calcium mobilization. Interacts with RNF113A; the interaction, enhanced by CXCL12, promotes CXCR4 ubiquitination and subsequent degradation. Interacts (via the cytoplasmic C-terminal) with ITCH (via the WW domains I and II); the interaction, enhanced by CXCL12, promotes CXCR4 ubiquitination and leads to its degradation. Interacts with extracellular ubiquitin. Interacts with DBN1; this interaction is enhanced by antigenic stimulation. Following LPS binding, may form a complex with GDF5, HSP90AA1 and HSPA8. In terms of processing, phosphorylated on agonist stimulation. Rapidly phosphorylated on serine and threonine residues in the C-terminal. Phosphorylation at Ser-324 and Ser-325 leads to recruitment of ITCH, ubiquitination and protein degradation. Post-translationally, ubiquitinated after ligand binding, leading to its degradation. Ubiquitinated by ITCH at the cell membrane on agonist stimulation. The ubiquitin-dependent mechanism, endosomal sorting complex required for transport (ESCRT), then targets CXCR4 for lysosomal degradation. This process is dependent also on prior Ser-/Thr-phosphorylation in the C-terminal of CXCR4. Also binding of ARRB1 to STAM negatively regulates CXCR4 sorting to lysosomes though modulating ubiquitination of SFR5S. Sulfation is required for efficient binding of CXCL12/SDF-1alpha and promotes its dimerization. In terms of processing, O- and N-glycosylated. N-glycosylation can mask coreceptor function. The O-glycosylation chondroitin sulfate attachment does not affect interaction with CXCL12/SDF-1alpha nor its coreceptor activity.

The protein resides in the cell membrane. Its subcellular location is the cell junction. It localises to the early endosome. The protein localises to the late endosome. It is found in the lysosome. Its function is as follows. Receptor for the C-X-C chemokine CXCL12/SDF-1 that transduces a signal by increasing intracellular calcium ion levels and enhancing MAPK1/MAPK3 activation. Involved in the AKT signaling cascade. Plays a role in regulation of cell migration, e.g. during wound healing. Acts as a receptor for extracellular ubiquitin; leading to enhanced intracellular calcium ions and reduced cellular cAMP levels. Binds bacterial lipopolysaccharide (LPS) et mediates LPS-induced inflammatory response, including TNF secretion by monocytes. Involved in hematopoiesis and in cardiac ventricular septum formation. Also plays an essential role in vascularization of the gastrointestinal tract, probably by regulating vascular branching and/or remodeling processes in endothelial cells. Involved in cerebellar development. In the CNS, could mediate hippocampal-neuron survival. In Macaca mulatta (Rhesus macaque), this protein is C-X-C chemokine receptor type 4 (CXCR4).